A 356-amino-acid chain; its full sequence is Tetraacyldisaccharide 4'-kinase (356 aa).

67–74 contacts ATP; the sequence is FVGGTGKT.

It belongs to the LpxK family.

The catalysed reaction is a lipid A disaccharide + ATP = a lipid IVA + ADP + H(+). The protein operates within glycolipid biosynthesis; lipid IV(A) biosynthesis; lipid IV(A) from (3R)-3-hydroxytetradecanoyl-[acyl-carrier-protein] and UDP-N-acetyl-alpha-D-glucosamine: step 6/6. Its function is as follows. Transfers the gamma-phosphate of ATP to the 4'-position of a tetraacyldisaccharide 1-phosphate intermediate (termed DS-1-P) to form tetraacyldisaccharide 1,4'-bis-phosphate (lipid IVA). This chain is Tetraacyldisaccharide 4'-kinase, found in Herminiimonas arsenicoxydans.